A 224-amino-acid chain; its full sequence is UPF0758 protein PST_0473 (224 aa).

An MPN domain is found at 102–224 (ALESPQAVRD…PLSMAEYGWM (123 aa)). Zn(2+)-binding residues include H173, H175, and D186. The short motif at 173-186 (HNHPSGVAEPSQAD) is the JAMM motif element.

It belongs to the UPF0758 family.

The chain is UPF0758 protein PST_0473 from Stutzerimonas stutzeri (strain A1501) (Pseudomonas stutzeri).